We begin with the raw amino-acid sequence, 217 residues long: Ribosomal RNA small subunit methyltransferase G (217 aa).

S-adenosyl-L-methionine contacts are provided by residues G85, L90, 135–136 (IE), and R149.

Belongs to the methyltransferase superfamily. RNA methyltransferase RsmG family.

It localises to the cytoplasm. It carries out the reaction guanosine(527) in 16S rRNA + S-adenosyl-L-methionine = N(7)-methylguanosine(527) in 16S rRNA + S-adenosyl-L-homocysteine. Its function is as follows. Specifically methylates the N7 position of guanine in position 527 of 16S rRNA. The polypeptide is Ribosomal RNA small subunit methyltransferase G (Acidiphilium cryptum (strain JF-5)).